We begin with the raw amino-acid sequence, 295 residues long: Protoheme IX farnesyltransferase (295 aa).

The next 9 membrane-spanning stretches (helical) occupy residues Leu30–Ile50, Ala51–Trp71, Ile93–Ile115, Tyr119–Tyr136, Ile148–Gly168, Leu175–Leu195, Ile219–Leu239, Leu244–Phe264, and Met275–Phe295.

The protein belongs to the UbiA prenyltransferase family. Protoheme IX farnesyltransferase subfamily.

Its subcellular location is the cell inner membrane. The enzyme catalyses heme b + (2E,6E)-farnesyl diphosphate + H2O = Fe(II)-heme o + diphosphate. Its pathway is porphyrin-containing compound metabolism; heme O biosynthesis; heme O from protoheme: step 1/1. Functionally, converts heme B (protoheme IX) to heme O by substitution of the vinyl group on carbon 2 of heme B porphyrin ring with a hydroxyethyl farnesyl side group. This chain is Protoheme IX farnesyltransferase, found in Ehrlichia ruminantium (strain Gardel).